A 355-amino-acid polypeptide reads, in one-letter code: Heavy metal-associated isoprenylated plant protein 7 (355 aa).

A compositionally biased stretch (basic and acidic residues) spans 1 to 58 (MGEEEKKPEAAEEKKMEEKKPEEKKEGEDKKVDAEKKGEDSDKKPQEGESNKDSKEDS). The disordered stretch occupies residues 1–74 (MGEEEKKPEA…APAPPPPPQE (74 aa)). The span at 63 to 73 (PEAPAPPPPPQ) shows a compositional bias: pro residues. 2 consecutive HMA domains span residues 72–136 (PQEV…HRQV) and 170–234 (VVTV…KHAA). A metal cation-binding residues include cysteine 83 and cysteine 86. The disordered stretch occupies residues 132 to 157 (THRQVQLLSPIPPPPPPPEKKAEEDK). Residues cysteine 181 and cysteine 184 each coordinate a metal cation. Residues 235–308 (IMKIDPPPPP…GGGEEEGKVV (74 aa)) form a disordered region. Residues 254 to 293 (EGEKKEEEKGEGESKGEEGKDDKAKTDEEKKEGDGGKGEG) show a composition bias toward basic and acidic residues. Cysteine 352 carries the cysteine methyl ester modification. The S-farnesyl cysteine moiety is linked to residue cysteine 352. Positions 353-355 (TVM) are cleaved as a propeptide — removed in mature form.

Belongs to the HIPP family. In terms of processing, efficiently farnesylated in vitro.

Heavy-metal-binding protein. Binds zinc, copper and nickel in a reversible manner. The protein is Heavy metal-associated isoprenylated plant protein 7 of Arabidopsis thaliana (Mouse-ear cress).